The primary structure comprises 440 residues: Glutamyl-tRNA(Gln) amidotransferase subunit D (440 aa).

Residues proline 94–asparagine 424 enclose the Asparaginase/glutaminase domain. Catalysis depends on residues threonine 104, threonine 180, aspartate 181, and lysine 258.

Belongs to the asparaginase 1 family. GatD subfamily. As to quaternary structure, heterodimer of GatD and GatE.

It catalyses the reaction L-glutamyl-tRNA(Gln) + L-glutamine + ATP + H2O = L-glutaminyl-tRNA(Gln) + L-glutamate + ADP + phosphate + H(+). In terms of biological role, allows the formation of correctly charged Gln-tRNA(Gln) through the transamidation of misacylated Glu-tRNA(Gln) in organisms which lack glutaminyl-tRNA synthetase. The reaction takes place in the presence of glutamine and ATP through an activated gamma-phospho-Glu-tRNA(Gln). The GatDE system is specific for glutamate and does not act on aspartate. The chain is Glutamyl-tRNA(Gln) amidotransferase subunit D from Thermococcus kodakarensis (strain ATCC BAA-918 / JCM 12380 / KOD1) (Pyrococcus kodakaraensis (strain KOD1)).